We begin with the raw amino-acid sequence, 400 residues long: Phosphoglycerate kinase (400 aa).

Substrate contacts are provided by residues 22–24 (DFN), arginine 38, 61–64 (HLGR), arginine 119, and arginine 152. ATP-binding positions include lysine 205, glycine 296, glutamate 327, and 353–356 (GGDT).

This sequence belongs to the phosphoglycerate kinase family. Monomer.

Its subcellular location is the cytoplasm. It catalyses the reaction (2R)-3-phosphoglycerate + ATP = (2R)-3-phospho-glyceroyl phosphate + ADP. Its pathway is carbohydrate degradation; glycolysis; pyruvate from D-glyceraldehyde 3-phosphate: step 2/5. The chain is Phosphoglycerate kinase from Campylobacter lari (strain RM2100 / D67 / ATCC BAA-1060).